A 362-amino-acid polypeptide reads, in one-letter code: Chorismate synthase (362 aa).

An NADP(+)-binding site is contributed by R47. FMN-binding positions include 124–126, G286, 301–305, and R327; these read RSS and KPTAT.

It belongs to the chorismate synthase family. Homotetramer. FMNH2 serves as cofactor.

It catalyses the reaction 5-O-(1-carboxyvinyl)-3-phosphoshikimate = chorismate + phosphate. Its pathway is metabolic intermediate biosynthesis; chorismate biosynthesis; chorismate from D-erythrose 4-phosphate and phosphoenolpyruvate: step 7/7. Catalyzes the anti-1,4-elimination of the C-3 phosphate and the C-6 proR hydrogen from 5-enolpyruvylshikimate-3-phosphate (EPSP) to yield chorismate, which is the branch point compound that serves as the starting substrate for the three terminal pathways of aromatic amino acid biosynthesis. This reaction introduces a second double bond into the aromatic ring system. The chain is Chorismate synthase from Trichormus variabilis (strain ATCC 29413 / PCC 7937) (Anabaena variabilis).